The sequence spans 618 residues: 1-deoxy-D-xylulose-5-phosphate synthase (618 aa).

Thiamine diphosphate-binding positions include His-72 and 113–115 (GHA). Asp-144 serves as a coordination point for Mg(2+). Residues 145–146 (GA), Asn-173, His-284, and Glu-359 each bind thiamine diphosphate. Asn-173 contacts Mg(2+).

Belongs to the transketolase family. DXPS subfamily. In terms of assembly, homodimer. It depends on Mg(2+) as a cofactor. Requires thiamine diphosphate as cofactor.

It catalyses the reaction D-glyceraldehyde 3-phosphate + pyruvate + H(+) = 1-deoxy-D-xylulose 5-phosphate + CO2. The protein operates within metabolic intermediate biosynthesis; 1-deoxy-D-xylulose 5-phosphate biosynthesis; 1-deoxy-D-xylulose 5-phosphate from D-glyceraldehyde 3-phosphate and pyruvate: step 1/1. Catalyzes the acyloin condensation reaction between C atoms 2 and 3 of pyruvate and glyceraldehyde 3-phosphate to yield 1-deoxy-D-xylulose-5-phosphate (DXP). The protein is 1-deoxy-D-xylulose-5-phosphate synthase of Dictyoglomus turgidum (strain DSM 6724 / Z-1310).